The primary structure comprises 302 residues: Sulfate adenylyltransferase subunit 2 (302 aa).

It belongs to the PAPS reductase family. CysD subfamily. As to quaternary structure, heterodimer composed of CysD, the smaller subunit, and CysN.

The catalysed reaction is sulfate + ATP + H(+) = adenosine 5'-phosphosulfate + diphosphate. It functions in the pathway sulfur metabolism; hydrogen sulfide biosynthesis; sulfite from sulfate: step 1/3. In terms of biological role, with CysN forms the ATP sulfurylase (ATPS) that catalyzes the adenylation of sulfate producing adenosine 5'-phosphosulfate (APS) and diphosphate, the first enzymatic step in sulfur assimilation pathway. APS synthesis involves the formation of a high-energy phosphoric-sulfuric acid anhydride bond driven by GTP hydrolysis by CysN coupled to ATP hydrolysis by CysD. The sequence is that of Sulfate adenylyltransferase subunit 2 from Bacteroides thetaiotaomicron (strain ATCC 29148 / DSM 2079 / JCM 5827 / CCUG 10774 / NCTC 10582 / VPI-5482 / E50).